We begin with the raw amino-acid sequence, 156 residues long: Aspartate carbamoyltransferase regulatory chain (156 aa).

Zn(2+)-binding residues include Cys110, Cys115, Cys140, and Cys143.

The protein belongs to the PyrI family. In terms of assembly, contains catalytic and regulatory chains. The cofactor is Zn(2+).

Functionally, involved in allosteric regulation of aspartate carbamoyltransferase. The polypeptide is Aspartate carbamoyltransferase regulatory chain (Methanocella arvoryzae (strain DSM 22066 / NBRC 105507 / MRE50)).